Consider the following 206-residue polypeptide: Small ribosomal subunit protein uS4 (206 aa).

The region spanning 98–163 (MRLDNIVYRL…SEKFKTFVEN (66 aa)) is the S4 RNA-binding domain.

The protein belongs to the universal ribosomal protein uS4 family. In terms of assembly, part of the 30S ribosomal subunit. Contacts protein S5. The interaction surface between S4 and S5 is involved in control of translational fidelity.

Functionally, one of the primary rRNA binding proteins, it binds directly to 16S rRNA where it nucleates assembly of the body of the 30S subunit. With S5 and S12 plays an important role in translational accuracy. The polypeptide is Small ribosomal subunit protein uS4 (Clostridium beijerinckii (strain ATCC 51743 / NCIMB 8052) (Clostridium acetobutylicum)).